A 273-amino-acid chain; its full sequence is Ribosomal RNA small subunit methyltransferase A (273 aa).

6 residues coordinate S-adenosyl-L-methionine: histidine 10, leucine 12, glycine 37, glutamate 58, aspartate 83, and asparagine 108.

It belongs to the class I-like SAM-binding methyltransferase superfamily. rRNA adenine N(6)-methyltransferase family. RsmA subfamily.

The protein localises to the cytoplasm. The enzyme catalyses adenosine(1518)/adenosine(1519) in 16S rRNA + 4 S-adenosyl-L-methionine = N(6)-dimethyladenosine(1518)/N(6)-dimethyladenosine(1519) in 16S rRNA + 4 S-adenosyl-L-homocysteine + 4 H(+). Functionally, specifically dimethylates two adjacent adenosines (A1518 and A1519) in the loop of a conserved hairpin near the 3'-end of 16S rRNA in the 30S particle. May play a critical role in biogenesis of 30S subunits. This Picosynechococcus sp. (strain ATCC 27264 / PCC 7002 / PR-6) (Agmenellum quadruplicatum) protein is Ribosomal RNA small subunit methyltransferase A.